The primary structure comprises 81 residues: RNA-binding protein Hfq (81 aa).

Residues D10–V69 enclose the Sm domain.

Belongs to the Hfq family. In terms of assembly, homohexamer.

Functionally, RNA chaperone that binds small regulatory RNA (sRNAs) and mRNAs to facilitate mRNA translational regulation in response to envelope stress, environmental stress and changes in metabolite concentrations. Also binds with high specificity to tRNAs. In Nitrosospira multiformis (strain ATCC 25196 / NCIMB 11849 / C 71), this protein is RNA-binding protein Hfq.